Consider the following 166-residue polypeptide: Protein phosphatase 1 regulatory subunit 1A (166 aa).

M1 carries the N-acetylmethionine modification. The interval 1–166 (MEQDNSPRKI…SQDSQGASAV (166 aa)) is disordered. An essential for activity region spans residues 9–12 (KIQF). The span at 19–29 (PHLDPEAAEQI) shows a compositional bias: basic and acidic residues. The residue at position 35 (T35) is a Phosphothreonine; by PKA. Positions 42–54 (TSDQSSPEVDEDR) are essential for activity. Phosphoserine is present on residues S43, S46, S47, and S67. Positions 104–114 (AAEGTGAQESQ) are enriched in low complexity. Positions 143-152 (AQERRGEEPS) are enriched in basic and acidic residues. The interval 143–166 (AQERRGEEPSTAKTSQDSQGASAV) is interaction with PPP1R15A. Residues 153-166 (TAKTSQDSQGASAV) show a composition bias toward polar residues.

Belongs to the protein phosphatase inhibitor 1 family. Interacts with PPP1R15A. Post-translationally, phosphorylation of Thr-35 is required for activity.

Functionally, inhibitor of protein-phosphatase 1. This protein may be important in hormonal control of glycogen metabolism. Hormones that elevate intracellular cAMP increase I-1 activity in many tissues. I-1 activation may impose cAMP control over proteins that are not directly phosphorylated by PKA. Following a rise in intracellular calcium, I-1 is inactivated by calcineurin (or PP2B). Does not inhibit type-2 phosphatases. This Oryctolagus cuniculus (Rabbit) protein is Protein phosphatase 1 regulatory subunit 1A (PPP1R1A).